A 591-amino-acid polypeptide reads, in one-letter code: Indole-3-acetic acid-amido synthetase GH3.10 (591 aa).

Belongs to the IAA-amido conjugating enzyme family. Expressed in cotyledons and hypocotyls.

In terms of biological role, catalyzes the synthesis of indole-3-acetic acid (IAA)-amino acid conjugates, providing a mechanism for the plant to cope with the presence of excess auxin. Involved in red light-specific hypocotyl elongation. May act downstream of a red light signal transduction and determine the degree of hypocotyl elongation. This Arabidopsis thaliana (Mouse-ear cress) protein is Indole-3-acetic acid-amido synthetase GH3.10.